Consider the following 261-residue polypeptide: MIIYNILIVLLLAINTLANPILPASPNATIVGGEKALAGECPYQISLQSSSHFCGGTILDEYWILTAAHCVAGQTASKLSIRYNSLKHSLGGEKISVAKIFAHEKYDSYQIDNDIALIKLKSPMKLNQKNAKAVGLPAKGSDVKVGDQVRVSGWGYLEEGSYSLPSELRRVDIAVVSRKECNELYSKANAEVTDNMICGGDVANGGKDSCQGDSGGPVVDVKNNQVVGIVSWGYGCARKGYPGVYTRVGNFIDWIESKRSQ.

The signal sequence occupies residues 1–18 (MIIYNILIVLLLAINTLA). Residues 19–29 (NPILPASPNAT) constitute a propeptide that is removed on maturation. One can recognise a Peptidase S1 domain in the interval 30 to 260 (IVGGEKALAG…FIDWIESKRS (231 aa)). A disulfide bridge links Cys54 with Cys70. Catalysis depends on charge relay system residues His69 and Asp114. Intrachain disulfides connect Cys181-Cys198 and Cys210-Cys236. Residue Ser214 is the Charge relay system of the active site.

The protein belongs to the peptidase S1 family.

The protein resides in the secreted. The sequence is that of Mite allergen Der p 3 (DERP3) from Dermatophagoides pteronyssinus (European house dust mite).